Reading from the N-terminus, the 663-residue chain is Epithelial sodium channel subunit gamma-2 (663 aa).

The Cytoplasmic portion of the chain corresponds to 1–55 (MSNSGKKLTQKLKKNLPVTGPQAPTLYELMQWYCLNTNTHGCRRIVVSKGRLRRW). The helical transmembrane segment at 56–76 (IWIVLTLIAVALIFWQCALLL) threads the bilayer. At 77-544 (MTYYSVSASI…GGQLGLWMSC (468 aa)) the chain is on the extracellular side. Disulfide bonds link C101–C286, C209–C217, C263–C270, C375–C460, C397–C456, C401–C452, C410–C437, and C412–C426. A helical membrane pass occupies residues 545–565 (SMVCGLEIVEVFFIDSFWVIL). The Cytoplasmic segment spans residues 566–663 (RQKWHKLCNW…IDSDEDVERF (98 aa)).

This sequence belongs to the amiloride-sensitive sodium channel (TC 1.A.6) family. SCNN1G subfamily. As to quaternary structure, component of the heterotrimeric epithelial sodium channel (ENaC) composed of an alpha/SCNN1A, a beta/SCNN1B and a gamma/SCNN1G subunit.

The protein localises to the apical cell membrane. The catalysed reaction is Na(+)(in) = Na(+)(out). Its activity is regulated as follows. Originally identified and characterized by its inhibition by the diuretic drug amiloride. Its function is as follows. This is one of the three pore-forming subunits of the heterotrimeric epithelial sodium channel (ENaC), a critical regulator of sodium balance and fluid homeostasis. ENaC operates in epithelial tissues, where it mediates the electrodiffusion of sodium ions from extracellular fluid through the apical membrane of cells, with water following osmotically. This is Epithelial sodium channel subunit gamma-2 (scnn1g-b) from Xenopus laevis (African clawed frog).